The sequence spans 444 residues: uncharacterized protein (444 aa).

The N-terminal 72 residues, 1 to 72 (MGFLTAAIRV…RPMWNVSFLR (72 aa)), are a transit peptide targeting the chloroplast. Positions 77-107 (HSTPARETGDDDISKSENSSSQDGDSCTKLK) are disordered. Residues 92-101 (SENSSSQDGD) are compositionally biased toward polar residues. The region spanning 175-272 (EILTPEEHFY…KNYVQPPTEI (98 aa)) is the CRM domain. The stretch at 292–355 (DALRAVRKYI…CLEDEQEEDE (64 aa)) forms a coiled coil. Disordered regions lie at residues 344–364 (EECL…ATDS) and 392–426 (KFPA…PNFD). The segment covering 346 to 357 (CLEDEQEEDEAG) has biased composition (acidic residues). Over residues 406 to 426 (DLGKAKSEGEENDDDKSPNFD) the composition is skewed to basic and acidic residues.

It is found in the plastid. The protein resides in the chloroplast. This is an uncharacterized protein from Arabidopsis thaliana (Mouse-ear cress).